A 172-amino-acid polypeptide reads, in one-letter code: Small ribosomal subunit protein uS5 (172 aa).

The region spanning 16-79 is the S5 DRBM domain; it reads LKDRLVAINR…ESAKKNLTRV (64 aa).

This sequence belongs to the universal ribosomal protein uS5 family. Part of the 30S ribosomal subunit. Contacts proteins S4 and S8.

Its function is as follows. With S4 and S12 plays an important role in translational accuracy. Functionally, located at the back of the 30S subunit body where it stabilizes the conformation of the head with respect to the body. The sequence is that of Small ribosomal subunit protein uS5 from Bacteroides fragilis (strain ATCC 25285 / DSM 2151 / CCUG 4856 / JCM 11019 / LMG 10263 / NCTC 9343 / Onslow / VPI 2553 / EN-2).